The following is a 247-amino-acid chain: Small ribosomal subunit protein uS2 (247 aa).

The protein belongs to the universal ribosomal protein uS2 family.

The chain is Small ribosomal subunit protein uS2 from Pseudomonas syringae pv. syringae (strain B728a).